The sequence spans 406 residues: Putative cyclin-F3-2 (406 aa).

The disordered stretch occupies residues 1 to 107 (MARPRTRSVA…PGAAGGPWQL (107 aa)). Composition is skewed to low complexity over residues 11 to 21 (RMEATAAAAAA) and 29 to 57 (NPDGAEGAAVVAVAPEAAAEGPNEPNAGE).

Belongs to the cyclin family. Cyclin F subfamily.

This Oryza sativa subsp. japonica (Rice) protein is Putative cyclin-F3-2 (CYCF3-2).